Reading from the N-terminus, the 557-residue chain is Potassium-transporting ATPase potassium-binding subunit (557 aa).

12 helical membrane passes run 5-25 (GFLL…PLGS), 63-83 (LSAI…MLLG), 132-152 (GLTV…FALI), 170-190 (LLRI…LFFI), 253-273 (FVQM…FGEV), 283-303 (LLWA…WAEV), 329-349 (VLVS…AVIA), 356-376 (ALGG…FGGV), 379-399 (GLYG…LMIG), 416-436 (LTAL…ALAM), 484-504 (LLAL…MAIA), and 526-546 (LFVG…FIPA).

It belongs to the KdpA family. The system is composed of three essential subunits: KdpA, KdpB and KdpC.

Its subcellular location is the cell inner membrane. In terms of biological role, part of the high-affinity ATP-driven potassium transport (or Kdp) system, which catalyzes the hydrolysis of ATP coupled with the electrogenic transport of potassium into the cytoplasm. This subunit binds the periplasmic potassium ions and delivers the ions to the membrane domain of KdpB through an intramembrane tunnel. This Escherichia coli O6:H1 (strain CFT073 / ATCC 700928 / UPEC) protein is Potassium-transporting ATPase potassium-binding subunit.